Reading from the N-terminus, the 337-residue chain is Peroxidase 14 (337 aa).

A signal peptide spans 1–22 (MARIGSFLILLSLTYALTLCIC). An N-linked (GlcNAc...) asparagine glycan is attached at N24. Intrachain disulfides connect C44–C124, C77–C82, C130–C331, and C209–C241. The active-site Proton acceptor is the H75. Ca(2+) contacts are provided by D76, V79, G81, D83, and S85. P172 contacts substrate. N-linked (GlcNAc...) asparagine glycosylation occurs at N191. Position 202 (H202) interacts with heme b. T203 provides a ligand contact to Ca(2+). N-linked (GlcNAc...) asparagine glycans are attached at residues N218 and N249. Positions 254, 257, and 262 each coordinate Ca(2+).

It belongs to the peroxidase family. Classical plant (class III) peroxidase subfamily. It depends on heme b as a cofactor. Ca(2+) serves as cofactor.

The protein localises to the secreted. It catalyses the reaction 2 a phenolic donor + H2O2 = 2 a phenolic radical donor + 2 H2O. Its function is as follows. Removal of H(2)O(2), oxidation of toxic reductants, biosynthesis and degradation of lignin, suberization, auxin catabolism, response to environmental stresses such as wounding, pathogen attack and oxidative stress. These functions might be dependent on each isozyme/isoform in each plant tissue. The chain is Peroxidase 14 (PER14) from Arabidopsis thaliana (Mouse-ear cress).